Reading from the N-terminus, the 431-residue chain is Enolase (431 aa).

A (2R)-2-phosphoglycerate-binding site is contributed by Gln163. Catalysis depends on Glu205, which acts as the Proton donor. Residues Asp242, Glu288, and Asp315 each contribute to the Mg(2+) site. Positions 340, 369, 370, and 391 each coordinate (2R)-2-phosphoglycerate. Lys340 (proton acceptor) is an active-site residue.

It belongs to the enolase family. Requires Mg(2+) as cofactor.

Its subcellular location is the cytoplasm. It is found in the secreted. The protein resides in the cell surface. The enzyme catalyses (2R)-2-phosphoglycerate = phosphoenolpyruvate + H2O. Its pathway is carbohydrate degradation; glycolysis; pyruvate from D-glyceraldehyde 3-phosphate: step 4/5. Functionally, catalyzes the reversible conversion of 2-phosphoglycerate (2-PG) into phosphoenolpyruvate (PEP). It is essential for the degradation of carbohydrates via glycolysis. This chain is Enolase, found in Bacillus anthracis (strain A0248).